The primary structure comprises 212 residues: Membrane-bound lytic murein transglycosylase E (212 aa).

This sequence belongs to the transglycosylase Slt family.

The enzyme catalyses Exolytic cleavage of the (1-&gt;4)-beta-glycosidic linkage between N-acetylmuramic acid (MurNAc) and N-acetylglucosamine (GlcNAc) residues in peptidoglycan, from either the reducing or the non-reducing ends of the peptidoglycan chains, with concomitant formation of a 1,6-anhydrobond in the MurNAc residue.. Murein-degrading enzyme. May play a role in recycling of muropeptides during cell elongation and/or cell division. This chain is Membrane-bound lytic murein transglycosylase E (mltE), found in Buchnera aphidicola subsp. Baizongia pistaciae (strain Bp).